We begin with the raw amino-acid sequence, 379 residues long: Leukocyte elastase inhibitor A (379 aa).

Ser-300 is modified (phosphoserine).

It belongs to the serpin family. Ov-serpin subfamily. As to quaternary structure, monomer.

It localises to the secreted. The protein localises to the cytoplasm. The protein resides in the cytolytic granule. Its subcellular location is the early endosome. Functionally, regulates the activity of the neutrophil proteases. The polypeptide is Leukocyte elastase inhibitor A (Serpinb1a) (Rattus norvegicus (Rat)).